The primary structure comprises 274 residues: 23S rRNA (adenosine(1067)-2'-O)-methyltransferase (274 aa).

Residues R165, L195, 218 to 220, 238 to 240, and 247 to 252 contribute to the S-adenosyl-L-methionine site; these read GSE, IPM, and LNVSVS.

The protein belongs to the class IV-like SAM-binding methyltransferase superfamily. RNA methyltransferase TsnR/AvirB family. In terms of assembly, homodimer.

It catalyses the reaction adenosine(1067) in 23S rRNA + S-adenosyl-L-methionine = 2'-O-methyladenosine(1067) in 23S rRNA + S-adenosyl-L-homocysteine + H(+). Its function is as follows. Specifically methylates the adenosine-1067 in 23S ribosomal RNA. Confers resistance to antibiotic nosiheptide. In Streptomyces actuosus, this protein is 23S rRNA (adenosine(1067)-2'-O)-methyltransferase.